The sequence spans 667 residues: MESMGRQDRRLHQQLKESSSRFQTLMKRLIAKYNQPFEDDPLVEMRTLTYETPQGLRVWGGKLMKKEDKEYTQVIDRLNGQAPEGDSESSGADTSLEENWPSCSSAMREASGDPRQRQPAVPGNTLETDLRRKYLTQVDILPQDEEYFKNAEKRGGKDTVMTWVPSVTSSVTPASGCQDAISAKSSGGPEVSALSSRGQGPSYPCPADMAIVARSDGLSLLGTSSNSVSSQSFEVDDLCNVTISDLYEGMMHSMSRLLRSKPSCIISTKTYINQSWKLRRRPSRKQGLHKNRTHCPRSKPSQRSARKGPASCSEPGKEAGILRDYGNLLHVAPHKTGLELKSVSLEGSKRQVHKSSPAWKELQMMPQKDLDLNRERENRVMTLQWLISPVKVVPRPRMLPSQVEKWYREIKIKFDKLHQEYCLSSGKQPRLTDPTESWAVDVYRSGSKSPGSRQDVETCRPSSPFGREKTERPGEALEDLRGNGKSVKTKSCLLRSCPSPEGSPSRSPSHSQLSSGLQEHNSEPTGKAVWPSTAISAPSIGSPGCGKDNYYELKKEFNRLYQKYCLSPQRAKVTSCGRVSPMKAAAALPCQSEHLKRLNPDSPQQSSQKRSISPGCHRRVLQDSTAQTASTLVRDSWLPTKRCKLSYPVACAHQAKFHDTSGASGWP.

The interval 78–126 (LNGQAPEGDSESSGADTSLEENWPSCSSAMREASGDPRQRQPAVPGNTL) is disordered. Phosphoserine is present on residues S169, S185, and S195. Disordered regions lie at residues 181–201 (ISAK…GQGP) and 279–317 (RRRP…EPGK). Positions 279-297 (RRRPSRKQGLHKNRTHCPR) are enriched in basic residues. Phosphoserine occurs at positions 388, 424, 449, and 462. The disordered stretch occupies residues 443 to 530 (YRSGSKSPGS…NSEPTGKAVW (88 aa)). Over residues 466-482 (GREKTERPGEALEDLRG) the composition is skewed to basic and acidic residues. Positions 496 to 515 (SCPSPEGSPSRSPSHSQLSS) are enriched in low complexity. Residue K554 forms a Glycyl lysine isopeptide (Lys-Gly) (interchain with G-Cter in SUMO2) linkage. S567 bears the Phosphoserine mark. The tract at residues 596–617 (KRLNPDSPQQSSQKRSISPGCH) is disordered. Residues 601–611 (DSPQQSSQKRS) are compositionally biased toward polar residues. S613 bears the Phosphoserine mark.

As to quaternary structure, interacts with CENPA (via CATD domain); the interaction is direct and specific for CENPA since it does not interact with H3.1- or H3.3-containing nucleosomes. Heterotrimer composed of HJURP, CENPA and histone H4, where HJURP interacts with the dimer formed by CENPA and histone H4 and prevents tetramerization of CENPA and H4. Identified in a centromere complex containing histones H2A, H2B and H4, and at least CENPA, CENPB, CENPC, CENPT, CENPN, HJURP, SUPT16H, SSRP1 and RSF1. Interacts with 14-3-3 family members in a phosphorylation-dependent manner. Interacts with MSH5 and NBN.

It localises to the nucleus. The protein resides in the nucleolus. The protein localises to the chromosome. Its subcellular location is the centromere. Functionally, centromeric protein that plays a central role in the incorporation and maintenance of histone H3-like variant CENPA at centromeres. Acts as a specific chaperone for CENPA and is required for the incorporation of newly synthesized CENPA molecules into nucleosomes at replicated centromeres. Prevents CENPA-H4 tetramerization and prevents premature DNA binding by the CENPA-H4 tetramer. Directly binds Holliday junctions. This is Holliday junction recognition protein (Hjurp) from Mus musculus (Mouse).